A 124-amino-acid polypeptide reads, in one-letter code: Ribonuclease pancreatic (124 aa).

Over residues 1–13 (KETAAAKFERQHI) the composition is skewed to basic and acidic residues. The tract at residues 1–24 (KETAAAKFERQHIDSNPSSVSSSN) is disordered. Positions 7 and 10 each coordinate substrate. The active-site Proton acceptor is the His-12. Low complexity predominate over residues 15-24 (SNPSSVSSSN). 4 cysteine pairs are disulfide-bonded: Cys-26–Cys-84, Cys-40–Cys-95, Cys-58–Cys-110, and Cys-65–Cys-72. The N-linked (GlcNAc...) asparagine; partial glycan is linked to Asn-34. Residues 41–45 (KPVNT), Lys-66, and Arg-85 each bind substrate. His-119 acts as the Proton donor in catalysis.

This sequence belongs to the pancreatic ribonuclease family. Monomer. Interacts with and forms tight 1:1 complexes with RNH1. Dimerization of two such complexes may occur. Interaction with RNH1 inhibits this protein. As to expression, pancreas.

Its subcellular location is the secreted. It carries out the reaction an [RNA] containing cytidine + H2O = an [RNA]-3'-cytidine-3'-phosphate + a 5'-hydroxy-ribonucleotide-3'-[RNA].. It catalyses the reaction an [RNA] containing uridine + H2O = an [RNA]-3'-uridine-3'-phosphate + a 5'-hydroxy-ribonucleotide-3'-[RNA].. Its function is as follows. Endonuclease that catalyzes the cleavage of RNA on the 3' side of pyrimidine nucleotides. Acts on single-stranded and double-stranded RNA. This is Ribonuclease pancreatic (RNASE1) from Antilocapra americana (Pronghorn).